A 270-amino-acid polypeptide reads, in one-letter code: Putative pyruvate, phosphate dikinase regulatory protein (270 aa).

148-155 (GVSRTSKT) contacts ADP.

It belongs to the pyruvate, phosphate/water dikinase regulatory protein family. PDRP subfamily.

It carries out the reaction N(tele)-phospho-L-histidyl/L-threonyl-[pyruvate, phosphate dikinase] + ADP = N(tele)-phospho-L-histidyl/O-phospho-L-threonyl-[pyruvate, phosphate dikinase] + AMP + H(+). It catalyses the reaction N(tele)-phospho-L-histidyl/O-phospho-L-threonyl-[pyruvate, phosphate dikinase] + phosphate + H(+) = N(tele)-phospho-L-histidyl/L-threonyl-[pyruvate, phosphate dikinase] + diphosphate. In terms of biological role, bifunctional serine/threonine kinase and phosphorylase involved in the regulation of the pyruvate, phosphate dikinase (PPDK) by catalyzing its phosphorylation/dephosphorylation. The protein is Putative pyruvate, phosphate dikinase regulatory protein of Bacillus cytotoxicus (strain DSM 22905 / CIP 110041 / 391-98 / NVH 391-98).